The chain runs to 265 residues: UDP-N-acetylenolpyruvoylglucosamine reductase (265 aa).

Residues 15 to 169 enclose the FAD-binding PCMH-type domain; sequence GVGGPAELWT…TRVRLKLKER (155 aa). Arg149 is an active-site residue. The segment at 182 to 203 is disordered; the sequence is DRARKGQPKRKSAGCAFKNPPG. The active-site Proton donor is Cys196.

This sequence belongs to the MurB family. The cofactor is FAD.

The protein localises to the cytoplasm. The enzyme catalyses UDP-N-acetyl-alpha-D-muramate + NADP(+) = UDP-N-acetyl-3-O-(1-carboxyvinyl)-alpha-D-glucosamine + NADPH + H(+). It participates in cell wall biogenesis; peptidoglycan biosynthesis. Its function is as follows. Cell wall formation. The sequence is that of UDP-N-acetylenolpyruvoylglucosamine reductase from Thermus thermophilus (strain ATCC BAA-163 / DSM 7039 / HB27).